Here is a 349-residue protein sequence, read N- to C-terminus: Protein RecA (349 aa).

65–72 serves as a coordination point for ATP; it reads GPESSGKT.

This sequence belongs to the RecA family.

The protein resides in the cytoplasm. Functionally, can catalyze the hydrolysis of ATP in the presence of single-stranded DNA, the ATP-dependent uptake of single-stranded DNA by duplex DNA, and the ATP-dependent hybridization of homologous single-stranded DNAs. It interacts with LexA causing its activation and leading to its autocatalytic cleavage. This chain is Protein RecA, found in Azotobacter vinelandii.